The chain runs to 343 residues: Cytoplasmic tRNA 2-thiolation protein 1 (343 aa).

The protein belongs to the TtcA family. CTU1/NCS6/ATPBD3 subfamily.

Its subcellular location is the cytoplasm. The protein operates within tRNA modification; 5-methoxycarbonylmethyl-2-thiouridine-tRNA biosynthesis. In terms of biological role, plays a central role in 2-thiolation of mcm(5)S(2)U at tRNA wobble positions of tRNA(Lys), tRNA(Glu) and tRNA(Gln). Directly binds tRNAs and probably acts by catalyzing adenylation of tRNAs, an intermediate required for 2-thiolation. It is unclear whether it acts as a sulfurtransferase that transfers sulfur from thiocarboxylated URM1 onto the uridine of tRNAs at wobble position. This Drosophila pseudoobscura pseudoobscura (Fruit fly) protein is Cytoplasmic tRNA 2-thiolation protein 1.